The chain runs to 368 residues: Chorismate synthase (368 aa).

Arg46 lines the NADP(+) pocket. FMN-binding positions include 123 to 125, 240 to 241, Gly285, 300 to 304, and Arg326; these read RSS, NA, and KPTPT.

This sequence belongs to the chorismate synthase family. Homotetramer. It depends on FMNH2 as a cofactor.

It carries out the reaction 5-O-(1-carboxyvinyl)-3-phosphoshikimate = chorismate + phosphate. It functions in the pathway metabolic intermediate biosynthesis; chorismate biosynthesis; chorismate from D-erythrose 4-phosphate and phosphoenolpyruvate: step 7/7. In terms of biological role, catalyzes the anti-1,4-elimination of the C-3 phosphate and the C-6 proR hydrogen from 5-enolpyruvylshikimate-3-phosphate (EPSP) to yield chorismate, which is the branch point compound that serves as the starting substrate for the three terminal pathways of aromatic amino acid biosynthesis. This reaction introduces a second double bond into the aromatic ring system. The chain is Chorismate synthase from Porphyromonas gingivalis (strain ATCC BAA-308 / W83).